We begin with the raw amino-acid sequence, 1263 residues long: DNA-directed RNA polymerase subunit beta (1263 aa).

It belongs to the RNA polymerase beta chain family. As to quaternary structure, the RNAP catalytic core consists of 2 alpha, 1 beta, 1 beta' and 1 omega subunit. When a sigma factor is associated with the core the holoenzyme is formed, which can initiate transcription.

The enzyme catalyses RNA(n) + a ribonucleoside 5'-triphosphate = RNA(n+1) + diphosphate. Functionally, DNA-dependent RNA polymerase catalyzes the transcription of DNA into RNA using the four ribonucleoside triphosphates as substrates. This chain is DNA-directed RNA polymerase subunit beta, found in Thermotoga maritima (strain ATCC 43589 / DSM 3109 / JCM 10099 / NBRC 100826 / MSB8).